The sequence spans 60 residues: Beta-defensin 11 (60 aa).

The N-terminal stretch at 1–22 (MRLHHLLLALLFLVLSAGSGIS) is a signal peptide. Cystine bridges form between Cys27–Cys56, Cys34–Cys49, and Cys39–Cys57.

This sequence belongs to the beta-defensin family. Neutrophilic granules.

It localises to the secreted. Its function is as follows. Has bactericidal activity. Active against E.coli ML35 and S.aureus 502A. This Bos taurus (Bovine) protein is Beta-defensin 11 (DEFB11).